We begin with the raw amino-acid sequence, 238 residues long: MRGIMKVFVLTGAGVSAESGLGTFRDKDGVWTKYDLNEVATPQGFARNPALVRDFYNARRANLAGARPNAAHDALAQLEAGLARRGGELFLCTQNVDDLHEKAGCRRVIHMHGELAVTRCHHCEATWPDTGPLKPDTVCAACARDGGARPHVVWFGEIPLFMDQIEDALSAADLFVSIGTSGSVYPAAGFVAEARAMGIATCEINLEPSANAYVFDEKVYGPATEVVPAWVERLLARL.

Residues 1 to 237 form the Deacetylase sirtuin-type domain; it reads MRGIMKVFVL…PAWVERLLAR (237 aa). Residue 12–31 coordinates NAD(+); the sequence is GAGVSAESGLGTFRDKDGVW. Substrate contacts are provided by tyrosine 56 and arginine 59. An NAD(+)-binding site is contributed by 94–97; sequence QNVD. The Proton acceptor role is filled by histidine 112. Zn(2+)-binding residues include cysteine 120, cysteine 123, cysteine 139, and cysteine 142. Residues 179–181, 205–207, and alanine 223 contribute to the NAD(+) site; these read GTS and NLE.

It belongs to the sirtuin family. Class III subfamily. It depends on Zn(2+) as a cofactor.

It is found in the cytoplasm. The catalysed reaction is N(6)-acetyl-L-lysyl-[protein] + NAD(+) + H2O = 2''-O-acetyl-ADP-D-ribose + nicotinamide + L-lysyl-[protein]. It carries out the reaction N(6)-succinyl-L-lysyl-[protein] + NAD(+) + H2O = 2''-O-succinyl-ADP-D-ribose + nicotinamide + L-lysyl-[protein]. Functionally, NAD-dependent lysine deacetylase and desuccinylase that specifically removes acetyl and succinyl groups on target proteins. Modulates the activities of several proteins which are inactive in their acylated form. The polypeptide is NAD-dependent protein deacylase (Caulobacter vibrioides (strain ATCC 19089 / CIP 103742 / CB 15) (Caulobacter crescentus)).